Here is a 390-residue protein sequence, read N- to C-terminus: Bifunctional enzyme IspD/IspF (390 aa).

The tract at residues 1-229 (MAAGRGERAG…RQDHAVFPDI (229 aa)) is 2-C-methyl-D-erythritol 4-phosphate cytidylyltransferase. Residues 230 to 390 (RTGNGYDVHS…TVIYPGEVPE (161 aa)) form a 2-C-methyl-D-erythritol 2,4-cyclodiphosphate synthase region. The a divalent metal cation site is built by Asp-236 and His-238. 4-CDP-2-C-methyl-D-erythritol 2-phosphate-binding positions include 236 to 238 (DVH) and 262 to 263 (HS). His-270 is an a divalent metal cation binding site. 4-CDP-2-C-methyl-D-erythritol 2-phosphate is bound by residues 284 to 286 (DIG), 360 to 363 (TTNE), Phe-367, and Arg-370.

The protein in the N-terminal section; belongs to the IspD/TarI cytidylyltransferase family. IspD subfamily. In the C-terminal section; belongs to the IspF family. A divalent metal cation is required as a cofactor.

The enzyme catalyses 2-C-methyl-D-erythritol 4-phosphate + CTP + H(+) = 4-CDP-2-C-methyl-D-erythritol + diphosphate. It catalyses the reaction 4-CDP-2-C-methyl-D-erythritol 2-phosphate = 2-C-methyl-D-erythritol 2,4-cyclic diphosphate + CMP. The protein operates within isoprenoid biosynthesis; isopentenyl diphosphate biosynthesis via DXP pathway; isopentenyl diphosphate from 1-deoxy-D-xylulose 5-phosphate: step 2/6. Its pathway is isoprenoid biosynthesis; isopentenyl diphosphate biosynthesis via DXP pathway; isopentenyl diphosphate from 1-deoxy-D-xylulose 5-phosphate: step 4/6. Bifunctional enzyme that catalyzes the formation of 4-diphosphocytidyl-2-C-methyl-D-erythritol from CTP and 2-C-methyl-D-erythritol 4-phosphate (MEP) (IspD), and catalyzes the conversion of 4-diphosphocytidyl-2-C-methyl-D-erythritol 2-phosphate (CDP-ME2P) to 2-C-methyl-D-erythritol 2,4-cyclodiphosphate (ME-CPP) with a corresponding release of cytidine 5-monophosphate (CMP) (IspF). This Brucella suis biovar 1 (strain 1330) protein is Bifunctional enzyme IspD/IspF.